The chain runs to 497 residues: Glycerol kinase (497 aa).

Thr-13 provides a ligand contact to ADP. Thr-13, Thr-14, and Ser-15 together coordinate ATP. Thr-13 lines the sn-glycerol 3-phosphate pocket. Arg-17 is an ADP binding site. Sn-glycerol 3-phosphate-binding residues include Arg-83, Glu-84, and Tyr-135. Residues Arg-83, Glu-84, and Tyr-135 each contribute to the glycerol site. His-231 is subject to Phosphohistidine; by HPr. Residue Asp-245 coordinates sn-glycerol 3-phosphate. Glycerol is bound by residues Asp-245 and Gln-246. Residues Thr-267 and Gly-310 each contribute to the ADP site. Residues Thr-267, Gly-310, Gln-314, and Gly-411 each coordinate ATP. Gly-411 and Asn-415 together coordinate ADP.

This sequence belongs to the FGGY kinase family. As to quaternary structure, homotetramer and homodimer (in equilibrium). The phosphoenolpyruvate-dependent sugar phosphotransferase system (PTS), including enzyme I, and histidine-containing protein (HPr) are required for the phosphorylation, which leads to the activation of the enzyme.

It catalyses the reaction glycerol + ATP = sn-glycerol 3-phosphate + ADP + H(+). Its pathway is polyol metabolism; glycerol degradation via glycerol kinase pathway; sn-glycerol 3-phosphate from glycerol: step 1/1. With respect to regulation, activated by phosphorylation and inhibited by fructose 1,6-bisphosphate (FBP). Functionally, key enzyme in the regulation of glycerol uptake and metabolism. Catalyzes the phosphorylation of glycerol to yield sn-glycerol 3-phosphate. The protein is Glycerol kinase of Listeria welshimeri serovar 6b (strain ATCC 35897 / DSM 20650 / CCUG 15529 / CIP 8149 / NCTC 11857 / SLCC 5334 / V8).